A 462-amino-acid chain; its full sequence is Golgi-associated PDZ and coiled-coil motif-containing protein (462 aa).

Residues 83 to 194 (KAQSVSQINH…EDEALRGHIA (112 aa)) adopt a coiled-coil conformation. In terms of domain architecture, PDZ spans 288–371 (KVLLLKEDHE…EIEFEVVYVA (84 aa)). The disordered stretch occupies residues 427-449 (TDTHENGDLGTASETPLDDGASK).

As to quaternary structure, homooligomer. Interacts with FZD5. Interacts with FZD8. Interacts with GRID2 and BECN1. Interacts with CSPG5. Interacts with CLCN3. Interacts with STX6. Interacts with CFTR. Interacts with ASIC3. Interacts with GOLGA3. Interacts with NLGN1. Interacts with RHOQ. Interacts with MARCHF2; the interaction leads to CFTR ubiquitination and degradation. May interact with CACNG2. Interacts with CCDC62.

It localises to the cytoplasm. The protein resides in the golgi apparatus membrane. It is found in the golgi apparatus. The protein localises to the trans-Golgi network membrane. Its subcellular location is the synapse. It localises to the postsynaptic density. The protein resides in the cell projection. It is found in the dendrite. In terms of biological role, plays a role in intracellular protein trafficking and degradation. May regulate CFTR chloride currents and acid-induced ASIC3 currents by modulating cell surface expression of both channels. May also regulate the intracellular trafficking of the ADR1B receptor. May play a role in autophagy. Together with MARCHF2 mediates the ubiquitination and lysosomal degradation of CFTR. Overexpression results in CFTR intracellular retention and degradation in the lysosomes. This chain is Golgi-associated PDZ and coiled-coil motif-containing protein (GOPC), found in Pongo abelii (Sumatran orangutan).